The sequence spans 190 residues: Imidazoleglycerol-phosphate dehydratase (190 aa).

This sequence belongs to the imidazoleglycerol-phosphate dehydratase family.

Its subcellular location is the cytoplasm. The catalysed reaction is D-erythro-1-(imidazol-4-yl)glycerol 3-phosphate = 3-(imidazol-4-yl)-2-oxopropyl phosphate + H2O. The protein operates within amino-acid biosynthesis; L-histidine biosynthesis; L-histidine from 5-phospho-alpha-D-ribose 1-diphosphate: step 6/9. The protein is Imidazoleglycerol-phosphate dehydratase of Campylobacter hominis (strain ATCC BAA-381 / DSM 21671 / CCUG 45161 / LMG 19568 / NCTC 13146 / CH001A).